The chain runs to 274 residues: Diaminopimelate epimerase (274 aa).

Residues Asn11, Gln44, and Asn64 each coordinate substrate. The active-site Proton donor is the Cys73. Substrate is bound by residues 74–75, Asn157, Asn190, and 208–209; these read GN and ER. Cys217 functions as the Proton acceptor in the catalytic mechanism. Residue 218–219 coordinates substrate; it reads GS.

The protein belongs to the diaminopimelate epimerase family. In terms of assembly, homodimer.

It is found in the cytoplasm. The enzyme catalyses (2S,6S)-2,6-diaminopimelate = meso-2,6-diaminopimelate. It participates in amino-acid biosynthesis; L-lysine biosynthesis via DAP pathway; DL-2,6-diaminopimelate from LL-2,6-diaminopimelate: step 1/1. Functionally, catalyzes the stereoinversion of LL-2,6-diaminopimelate (L,L-DAP) to meso-diaminopimelate (meso-DAP), a precursor of L-lysine and an essential component of the bacterial peptidoglycan. The polypeptide is Diaminopimelate epimerase (Actinobacillus pleuropneumoniae serotype 7 (strain AP76)).